A 128-amino-acid polypeptide reads, in one-letter code: Fluoride-specific ion channel FluC (128 aa).

Transmembrane regions (helical) follow at residues 5–25 (ALVA…SMVI), 32–52 (TFPW…GLFA), 70–90 (FFMV…LQTL), and 106–126 (VGSV…ATII). 2 residues coordinate Na(+): glycine 77 and threonine 80.

The protein belongs to the fluoride channel Fluc/FEX (TC 1.A.43) family.

It is found in the cell inner membrane. The enzyme catalyses fluoride(in) = fluoride(out). Its activity is regulated as follows. Na(+) is not transported, but it plays an essential structural role and its presence is essential for fluoride channel function. Its function is as follows. Fluoride-specific ion channel. Important for reducing fluoride concentration in the cell, thus reducing its toxicity. This is Fluoride-specific ion channel FluC from Paramagnetospirillum magneticum (strain ATCC 700264 / AMB-1) (Magnetospirillum magneticum).